The sequence spans 110 residues: Iron-sulfur cluster assembly protein CyaY (110 aa).

Belongs to the frataxin family.

Functionally, involved in iron-sulfur (Fe-S) cluster assembly. May act as a regulator of Fe-S biogenesis. The sequence is that of Iron-sulfur cluster assembly protein CyaY from Stutzerimonas stutzeri (strain A1501) (Pseudomonas stutzeri).